We begin with the raw amino-acid sequence, 122 residues long: Venom protein 7.1 (122 aa).

The first 19 residues, 1-19 (MRFSIISASLVLIFANVKA), serve as a signal peptide directing secretion.

Contains 3 disulfide bonds. As to expression, expressed by the venom gland.

The protein resides in the secreted. The polypeptide is Venom protein 7.1 (Lychas mucronatus (Chinese swimming scorpion)).